A 541-amino-acid chain; its full sequence is Atrial natriuretic peptide receptor 3 (541 aa).

The N-terminal stretch at 1–26 (MPSLLVLTFSPCVLLGWALLAGGTGG) is a signal peptide. Residues 27–481 (GGVGGGGGGA…PCKSSGGLEE (455 aa)) are Extracellular-facing. Asparagine 86 carries an N-linked (GlcNAc...) (complex) asparagine glycan. Chloride-binding residues include serine 106, valine 135, and cysteine 136. Cystine bridges form between cysteine 108–cysteine 136 and cysteine 213–cysteine 261. Asparagine 293 is a glycosylation site (N-linked (GlcNAc...) (high mannose) asparagine). A glycan (N-linked (GlcNAc...) (complex) asparagine) is linked at asparagine 394. A helical transmembrane segment spans residues 482–504 (SAVTGIVVGALLGAGLLMAFYFF). The Cytoplasmic segment spans residues 505-541 (RKKYRITIERRTQQEESNLGKHRELREDSIRSHFSVA).

Belongs to the ANF receptor family. As to quaternary structure, homodimer; disulfide-linked. Dimers can also be formed through the C-terminal cysteine of isoform 2. Interacts with OSTN.

It localises to the cell membrane. Receptor for the natriuretic peptide hormones, binding with similar affinities atrial natriuretic peptide NPPA/ANP, brain natriuretic peptide NPPB/BNP, and C-type natriuretic peptide NPPC/CNP. May function as a clearance receptor for NPPA, NPPB and NPPC, regulating their local concentrations and effects. Acts as a regulator of osteoblast differentiation and bone growth by binding to its ligand osteocrin, thereby preventing binding between NPR3/NPR-C and natriuretic peptides, leading to increase cGMP production. This chain is Atrial natriuretic peptide receptor 3 (NPR3), found in Homo sapiens (Human).